The sequence spans 466 residues: MITLYNTLTRQKEVFKPIEPGKVKMYVCGPTVYNYIHIGNARPAINYDVVRRYFEYQGYNVEYVSNFTDVDDKLIKRSQELNQSVPEIAEKYIAAFHEDVGALNVRKATSNPRVMDHMDDIIQFIKDLVDQGYAYESGGDVYFRTRKFEGYGKLSHQSIDDLKVGARIDAGEHKEDALDFTLWKKAKPGEISWDSPFGEGRPGWHIECSVMAFHELGPTIDIHAGGSDLQFPHHENEIAQSEAHNHAPFANYWMHNGFINIDNEKMSKSLGNFILVHDIIKEVDPDVLRFFMISVHYRSPINYNLELVESARSGLERIRNSYQLIEERAQIATNIENQQTYIDQIDAILNRFETVMNDDFNTANAITAWYDLAKLANKYVLENTTSTEVIDKFKAVYQIFSDVLGVPLKSKNADELLDEDVEKLIEERNEARKNKDFARADEIRDMLKSQNIILEDTPQGVRFKRG.

C28 lines the Zn(2+) pocket. The short motif at 30 to 40 is the 'HIGH' region element; sequence PTVYNYIHIGN. Zn(2+) is bound by residues C208, H233, and E237. Residues 265–269 carry the 'KMSKS' region motif; sequence KMSKS. Residue K268 participates in ATP binding.

The protein belongs to the class-I aminoacyl-tRNA synthetase family. In terms of assembly, monomer. Zn(2+) serves as cofactor.

It is found in the cytoplasm. The catalysed reaction is tRNA(Cys) + L-cysteine + ATP = L-cysteinyl-tRNA(Cys) + AMP + diphosphate. This Staphylococcus aureus (strain USA300) protein is Cysteine--tRNA ligase.